The sequence spans 315 residues: DNA-directed RNA polymerase subunit alpha (315 aa).

An alpha N-terminal domain (alpha-NTD) region spans residues 1–228; it reads MIEMEKPKVE…EHLNLFITLK (228 aa). The tract at residues 245 to 315 is alpha C-terminal domain (alpha-CTD); the sequence is KEKVLEMTIE…LGLGLRPSDE (71 aa).

It belongs to the RNA polymerase alpha chain family. As to quaternary structure, homodimer. The RNAP catalytic core consists of 2 alpha, 1 beta, 1 beta' and 1 omega subunit. When a sigma factor is associated with the core the holoenzyme is formed, which can initiate transcription.

It catalyses the reaction RNA(n) + a ribonucleoside 5'-triphosphate = RNA(n+1) + diphosphate. Its function is as follows. DNA-dependent RNA polymerase catalyzes the transcription of DNA into RNA using the four ribonucleoside triphosphates as substrates. This Alkaliphilus metalliredigens (strain QYMF) protein is DNA-directed RNA polymerase subunit alpha.